The sequence spans 122 residues: T cell receptor gamma variable 9 (122 aa).

An N-terminal signal peptide occupies residues 1–20 (MLSLLHTSTLAVLGALCVYG). The 96-residue stretch at 27-122 (PQISSTKTLS…ATYYCALWEV (96 aa)) folds into the Ig-like domain. The cysteines at positions 43 and 117 are disulfide-linked.

As to quaternary structure, gamma-delta TR is a heterodimer composed of a gamma and delta chain; disulfide-linked. The gamma-delta TR is associated with the transmembrane signaling CD3 coreceptor proteins following the stoichiometry: a single gamma-delta TR heterodimer associates with one CD3D-CD3E heterodimer, one CD3G-CD3E heterodimer and one CD247 homodimer forming a stable octameric structure. Upon activation, gamma-delta TR complex associates with FCER1G to initiate intracellular signaling.

The protein localises to the cell membrane. Its function is as follows. V region of the variable domain of T cell receptor (TR) gamma chain that participates in the antigen recognition. Gamma-delta TRs recognize a variety of self and foreign non-peptide antigens frequently expressed at the epithelial boundaries between the host and external environment, including endogenous lipids presented by MH-like protein CD1D and phosphoantigens presented by butyrophilin-like molecule BTN3A1. Upon antigen recognition induces rapid, innate-like immune responses involved in pathogen clearance and tissue repair. Binding of gamma-delta TR complex to antigen triggers phosphorylation of immunoreceptor tyrosine-based activation motifs (ITAMs) in the CD3 chains by the LCK and FYN kinases, allowing the recruitment, phosphorylation, and activation of ZAP70 that facilitates phosphorylation of the scaffolding proteins LCP2 and LAT. This lead to the formation of a supramolecular signalosome that recruits the phospholipase PLCG1, resulting in calcium mobilization and ERK activation, ultimately leading to T cell expansion and differentiation into effector cells. Gamma-delta TRs are produced through somatic rearrangement of a limited repertoire of variable (V), diversity (D), and joining (J) genes. The potential diversity of gamma-delta TRs is conferred by the unique ability to rearrange (D) genes in tandem and to utilize all three reading frames. The combinatorial diversity is considerably increased by the sequence exonuclease trimming and random nucleotide (N) region additions which occur during the V-(D)-J rearrangements. This Homo sapiens (Human) protein is T cell receptor gamma variable 9.